A 266-amino-acid polypeptide reads, in one-letter code: 4-hydroxy-tetrahydrodipicolinate reductase (266 aa).

Residue 10–15 (GPRGRM) coordinates NAD(+). Position 38 (Lys38) interacts with NADP(+). NAD(+) is bound by residues 99–101 (GTT) and 125–128 (APNF). The active-site Proton donor/acceptor is the His155. A (S)-2,3,4,5-tetrahydrodipicolinate-binding site is contributed by His156. Lys159 serves as the catalytic Proton donor. 165–166 (GT) is a (S)-2,3,4,5-tetrahydrodipicolinate binding site.

Belongs to the DapB family.

The protein localises to the cytoplasm. The catalysed reaction is (S)-2,3,4,5-tetrahydrodipicolinate + NAD(+) + H2O = (2S,4S)-4-hydroxy-2,3,4,5-tetrahydrodipicolinate + NADH + H(+). The enzyme catalyses (S)-2,3,4,5-tetrahydrodipicolinate + NADP(+) + H2O = (2S,4S)-4-hydroxy-2,3,4,5-tetrahydrodipicolinate + NADPH + H(+). It participates in amino-acid biosynthesis; L-lysine biosynthesis via DAP pathway; (S)-tetrahydrodipicolinate from L-aspartate: step 4/4. Functionally, catalyzes the conversion of 4-hydroxy-tetrahydrodipicolinate (HTPA) to tetrahydrodipicolinate. The sequence is that of 4-hydroxy-tetrahydrodipicolinate reductase from Bacillus cereus (strain Q1).